Consider the following 424-residue polypeptide: Probable threonylcarbamoyladenosine tRNA methylthiotransferase (424 aa).

Positions 1–106 constitute an MTTase N-terminal domain; that stretch reads MRVAIETYGC…VVDAVYSALN (106 aa). Positions 10, 44, 73, 143, 147, and 150 each coordinate [4Fe-4S] cluster. The 231-residue stretch at 129-359 folds into the Radical SAM core domain; that stretch reads LRENAIAIVS…TDLMRKIGLE (231 aa). Positions 362 to 420 constitute a TRAM domain; that stretch reads KRFVGKKLRVLVTKEGKNGRNLARMNSYRAVVTEGAVGEFVEVKIKDCRFNYLIGQLAA.

This sequence belongs to the methylthiotransferase family. CDKAL1 subfamily. [4Fe-4S] cluster is required as a cofactor.

It catalyses the reaction N(6)-L-threonylcarbamoyladenosine(37) in tRNA + (sulfur carrier)-SH + AH2 + 2 S-adenosyl-L-methionine = 2-methylsulfanyl-N(6)-L-threonylcarbamoyladenosine(37) in tRNA + (sulfur carrier)-H + 5'-deoxyadenosine + L-methionine + A + S-adenosyl-L-homocysteine + 2 H(+). Functionally, catalyzes the methylthiolation of N6-threonylcarbamoyladenosine (t(6)A), leading to the formation of 2-methylthio-N6-threonylcarbamoyladenosine (ms(2)t(6)A) at position 37 in tRNAs that read codons beginning with adenine. The polypeptide is Probable threonylcarbamoyladenosine tRNA methylthiotransferase (Archaeoglobus fulgidus (strain ATCC 49558 / DSM 4304 / JCM 9628 / NBRC 100126 / VC-16)).